We begin with the raw amino-acid sequence, 399 residues long: Rho GTPase-activating protein gacC (399 aa).

Residues 1–13 (MESKDQNVYRKGS) show a composition bias toward basic and acidic residues. The tract at residues 1–80 (MESKDQNVYR…SSSTSTTPVK (80 aa)) is disordered. Positions 14 to 31 (DNFSKGSNTFFGNLKSIS) are enriched in polar residues. Residues 61–79 (SVDSSSSNPSSSSTSTTPV) are compositionally biased toward low complexity. One can recognise a Rho-GAP domain in the interval 186 to 375 (VELEESFKTA…NLISFFQQIF (190 aa)).

The protein resides in the cytoplasm. Its function is as follows. Rho GTPase-activating protein involved in the signal transduction pathway. The sequence is that of Rho GTPase-activating protein gacC (gacC) from Dictyostelium discoideum (Social amoeba).